The primary structure comprises 481 residues: 2-succinylbenzoate--CoA ligase (481 aa).

This sequence belongs to the ATP-dependent AMP-binding enzyme family. MenE subfamily.

It carries out the reaction 2-succinylbenzoate + ATP + CoA = 2-succinylbenzoyl-CoA + AMP + diphosphate. Its pathway is quinol/quinone metabolism; 1,4-dihydroxy-2-naphthoate biosynthesis; 1,4-dihydroxy-2-naphthoate from chorismate: step 5/7. The protein operates within quinol/quinone metabolism; menaquinone biosynthesis. Converts 2-succinylbenzoate (OSB) to 2-succinylbenzoyl-CoA (OSB-CoA). The protein is 2-succinylbenzoate--CoA ligase of Bacillus cereus (strain ATCC 10987 / NRS 248).